A 494-amino-acid polypeptide reads, in one-letter code: Zinc metalloproteinase/disintegrin (494 aa).

Residues 1 to 20 (MIQVLLVTICLAVFPFQGSS) form the signal peptide. Residues 21 to 193 (KTLKSGNVND…KKASHLVATS (173 aa)) constitute a propeptide that is removed on maturation. The Peptidase M12B domain maps to 201-396 (RYVQLVIVAD…HNPPCILNQA (196 aa)). 3 disulfide bridges follow: Cys311/Cys391, Cys351/Cys375, and Cys353/Cys358. His336 provides a ligand contact to Zn(2+). The active site involves Glu337. Residues His340 and His346 each contribute to the Zn(2+) site. Residues 410-431 (ELLQNSVNPCYDPVTCQPKEKE) constitute a propeptide that is removed on maturation. In terms of domain architecture, Disintegrin spans 417–478 (NPCYDPVTCQ…DCPRNPYKGE (62 aa)). 4 cysteine pairs are disulfide-bonded: Cys433–Cys442, Cys438–Cys463, Cys439–Cys468, and Cys451–Cys470. Residues 455–457 (RGD) carry the Cell attachment site motif. A propeptide spanning residues 482–494 (MEWPAPAKGSVLM) is cleaved from the precursor.

Belongs to the venom metalloproteinase (M12B) family. P-II subfamily. P-IIa sub-subfamily. Monomer (disintegrin). As to expression, expressed by the venom gland.

The protein localises to the secreted. Its function is as follows. Impairs hemostasis in the envenomed animal. Inhibits ADP-induced platelet aggregation (IC(50)=168 nM). Inhibits alpha-5/beta-1 (ITGA5/ITGB1) integrin and induces the expression of a ligand-induced binding site epitope on beta-1 integrin subunit. Has a direct chemotactic stimulus on human neutrophils in vitro. This chain is Zinc metalloproteinase/disintegrin, found in Echis ocellatus (Ocellated saw-scaled viper).